The following is a 136-amino-acid chain: Small ribosomal subunit protein bS16 (136 aa).

Over residues 114-123 the composition is skewed to basic residues; that stretch reads TLKARRRRAK. A disordered region spans residues 114–136; the sequence is TLKARRRRAKKEAEAASASSAEG.

Belongs to the bacterial ribosomal protein bS16 family.

The chain is Small ribosomal subunit protein bS16 from Chlorobium chlorochromatii (strain CaD3).